A 163-amino-acid polypeptide reads, in one-letter code: 6,7-dimethyl-8-ribityllumazine synthase (163 aa).

5-amino-6-(D-ribitylamino)uracil contacts are provided by residues Phe-27, 58–60 (ALE), and 87–89 (CVV). (2S)-2-hydroxy-3-oxobutyl phosphate is bound at residue 92–93 (DT). His-95 (proton donor) is an active-site residue. Asn-120 contacts 5-amino-6-(D-ribitylamino)uracil. Arg-134 lines the (2S)-2-hydroxy-3-oxobutyl phosphate pocket.

The protein belongs to the DMRL synthase family.

The enzyme catalyses (2S)-2-hydroxy-3-oxobutyl phosphate + 5-amino-6-(D-ribitylamino)uracil = 6,7-dimethyl-8-(1-D-ribityl)lumazine + phosphate + 2 H2O + H(+). Its pathway is cofactor biosynthesis; riboflavin biosynthesis; riboflavin from 2-hydroxy-3-oxobutyl phosphate and 5-amino-6-(D-ribitylamino)uracil: step 1/2. Its function is as follows. Catalyzes the formation of 6,7-dimethyl-8-ribityllumazine by condensation of 5-amino-6-(D-ribitylamino)uracil with 3,4-dihydroxy-2-butanone 4-phosphate. This is the penultimate step in the biosynthesis of riboflavin. The sequence is that of 6,7-dimethyl-8-ribityllumazine synthase from Nitrobacter hamburgensis (strain DSM 10229 / NCIMB 13809 / X14).